The following is a 211-amino-acid chain: Claudin-1 (211 aa).

Residues 1–7 (MANAGLQ) lie on the Cytoplasmic side of the membrane. Residues 8–28 (LLGFILASLGWIGSIVSTALP) form a helical membrane-spanning segment. The Extracellular segment spans residues 29–81 (QWKIYSYAGDNIVTAQAIYEGLWMSCVSQSTGQIQCKVFDSLLNLNSTLQATR). A disulfide bond links cysteine 54 and cysteine 64. Residues 82 to 102 (ALMVIGILLGLIAIFVSTIGM) form a helical membrane-spanning segment. Residues 103-115 (KCMRCLEDDEVQK) are Cytoplasmic-facing. Residues 116–136 (MWMAVIGGIIFVISGLATLVA) traverse the membrane as a helical segment. Residues 137-163 (TAWYGNRIVQEFYDPMTPVNARYEFGQ) lie on the Extracellular side of the membrane. The chain crosses the membrane as a helical span at residues 164 to 184 (ALFTGWAAASLCLLGGALLSC). Residues 185–211 (SCPRKTTSYPTPRPYPKPTPSSGKDYV) lie on the Cytoplasmic side of the membrane. The segment at 190–211 (TTSYPTPRPYPKPTPSSGKDYV) is disordered. Residues 210-211 (YV) form an interactions with TJP1, TJP2, TJP3 and PATJ region.

The protein belongs to the claudin family. Can form homo- and heteropolymers with other CLDN. Homopolymers interact with CLDN3, but not CLDN2, homopolymers. Directly interacts with TJP1/ZO-1, TJP2/ZO-2 and TJP3/ZO-3. Interacts with MPDZ and PATJ. Interacts with OCLN, CD81, CLDN4, CLDN6 and CLDN9. As to expression, detected in epididymis (at protein level). Detected in testis and epididymis.

The protein resides in the cell junction. It localises to the tight junction. The protein localises to the cell membrane. It is found in the basolateral cell membrane. In terms of biological role, claudins function as major constituents of the tight junction complexes that regulate the permeability of epithelia. While some claudin family members play essential roles in the formation of impermeable barriers, others mediate the permeability to ions and small molecules. Often, several claudin family members are coexpressed and interact with each other, and this determines the overall permeability. CLDN1 is required to prevent the paracellular diffusion of small molecules through tight junctions in the epidermis and is required for the normal barrier function of the skin. Required for normal water homeostasis and to prevent excessive water loss through the skin, probably via an indirect effect on the expression levels of other proteins, since CLDN1 itself seems to be dispensable for water barrier formation in keratinocyte tight junctions. The polypeptide is Claudin-1 (Cldn1) (Rattus norvegicus (Rat)).